The following is a 110-amino-acid chain: Insulin (110 aa).

The signal sequence occupies residues 1–24 (MALWTRLLPLLALLALLGPDPAQA). 3 disulfide bridges follow: Cys-31/Cys-96, Cys-43/Cys-109, and Cys-95/Cys-100. Positions 57–87 (EVEEQQGGQVELGGGPGAGLPQPLALEMALQ) are cleaved as a propeptide — c peptide.

It belongs to the insulin family. In terms of assembly, heterodimer of a B chain and an A chain linked by two disulfide bonds.

Its subcellular location is the secreted. Insulin decreases blood glucose concentration. It increases cell permeability to monosaccharides, amino acids and fatty acids. It accelerates glycolysis, the pentose phosphate cycle, and glycogen synthesis in liver. The sequence is that of Insulin (INS) from Ictidomys tridecemlineatus (Thirteen-lined ground squirrel).